A 128-amino-acid chain; its full sequence is Large ribosomal subunit protein uL24 (128 aa).

Positions 105 to 128 (KAKSRQVGKEKGKYKEETIEKMQE) are disordered.

This sequence belongs to the universal ribosomal protein uL24 family. In terms of assembly, component of the large ribosomal subunit.

The protein resides in the cytoplasm. In terms of biological role, component of the large ribosomal subunit. The ribosome is a large ribonucleoprotein complex responsible for the synthesis of proteins in the cell. The protein is Large ribosomal subunit protein uL24 (RPL26) of Gallus gallus (Chicken).